The following is a 423-amino-acid chain: Deoxyguanosinetriphosphate triphosphohydrolase-like protein (423 aa).

An HD domain is found at 66-216 (RLTHSLEVAQ…MDFSDDIAYS (151 aa)).

It belongs to the dGTPase family. Type 2 subfamily.

The chain is Deoxyguanosinetriphosphate triphosphohydrolase-like protein from Corynebacterium diphtheriae (strain ATCC 700971 / NCTC 13129 / Biotype gravis).